The primary structure comprises 337 residues: Putative tRNA (cytidine(32)/guanosine(34)-2'-O)-methyltransferase (337 aa).

Positions 53, 55, 76, 92, and 117 each coordinate S-adenosyl-L-methionine. The Proton acceptor role is filled by K157. Basic and acidic residues-rich tracts occupy residues 304-318 (LKAE…KKTP) and 327-337 (ELEKAAEKFQL). A disordered region spans residues 304–337 (LKAELSRGKDQKKTPAENVPSVEELEKAAEKFQL).

This sequence belongs to the class I-like SAM-binding methyltransferase superfamily. RNA methyltransferase RlmE family. TRM7 subfamily.

The protein localises to the cytoplasm. It carries out the reaction cytidine(32)/guanosine(34) in tRNA + 2 S-adenosyl-L-methionine = 2'-O-methylcytidine(32)/2'-O-methylguanosine(34) in tRNA + 2 S-adenosyl-L-homocysteine + 2 H(+). In terms of biological role, methylates the 2'-O-ribose of nucleotides at positions 32 and 34 of the tRNA anticodon loop of substrate tRNAs. In Caenorhabditis elegans, this protein is Putative tRNA (cytidine(32)/guanosine(34)-2'-O)-methyltransferase.